The sequence spans 230 residues: Proteasome subunit alpha (230 aa).

Belongs to the peptidase T1A family. The 20S proteasome core is composed of 14 alpha and 14 beta subunits that assemble into four stacked heptameric rings, resulting in a barrel-shaped structure. The two inner rings, each composed of seven catalytic beta subunits, are sandwiched by two outer rings, each composed of seven alpha subunits. The catalytic chamber with the active sites is on the inside of the barrel. Has a gated structure, the ends of the cylinder being occluded by the N-termini of the alpha-subunits. Is capped by the proteasome-associated ATPase, ARC.

The protein resides in the cytoplasm. The protein operates within protein degradation; proteasomal Pup-dependent pathway. The formation of the proteasomal ATPase ARC-20S proteasome complex, likely via the docking of the C-termini of ARC into the intersubunit pockets in the alpha-rings, may trigger opening of the gate for substrate entry. Interconversion between the open-gate and close-gate conformations leads to a dynamic regulation of the 20S proteasome proteolysis activity. Component of the proteasome core, a large protease complex with broad specificity involved in protein degradation. In Thermomonospora curvata (strain ATCC 19995 / DSM 43183 / JCM 3096 / KCTC 9072 / NBRC 15933 / NCIMB 10081 / Henssen B9), this protein is Proteasome subunit alpha.